Here is a 296-residue protein sequence, read N- to C-terminus: NAD kinase (296 aa).

D78 functions as the Proton acceptor in the catalytic mechanism. NAD(+) is bound by residues 78–79 (DG), 152–153 (ND), R180, D182, and Q251.

This sequence belongs to the NAD kinase family. A divalent metal cation serves as cofactor.

It is found in the cytoplasm. It catalyses the reaction NAD(+) + ATP = ADP + NADP(+) + H(+). Involved in the regulation of the intracellular balance of NAD and NADP, and is a key enzyme in the biosynthesis of NADP. Catalyzes specifically the phosphorylation on 2'-hydroxyl of the adenosine moiety of NAD to yield NADP. This is NAD kinase from Neisseria meningitidis serogroup C (strain 053442).